A 124-amino-acid polypeptide reads, in one-letter code: Small ribosomal subunit protein uS12 (124 aa).

Asp-90 bears the 3-methylthioaspartic acid mark.

It belongs to the universal ribosomal protein uS12 family. In terms of assembly, part of the 30S ribosomal subunit. Contacts proteins S8 and S17. May interact with IF1 in the 30S initiation complex.

Its function is as follows. With S4 and S5 plays an important role in translational accuracy. Interacts with and stabilizes bases of the 16S rRNA that are involved in tRNA selection in the A site and with the mRNA backbone. Located at the interface of the 30S and 50S subunits, it traverses the body of the 30S subunit contacting proteins on the other side and probably holding the rRNA structure together. The combined cluster of proteins S8, S12 and S17 appears to hold together the shoulder and platform of the 30S subunit. The sequence is that of Small ribosomal subunit protein uS12 from Wolbachia pipientis subsp. Culex pipiens (strain wPip).